Consider the following 144-residue polypeptide: Transcriptional regulator MraZ (144 aa).

SpoVT-AbrB domains follow at residues 5 to 47 (TYTP…PRAE) and 77 to 120 (TDEQ…DAQA).

The protein belongs to the MraZ family. Forms oligomers.

Its subcellular location is the cytoplasm. The protein resides in the nucleoid. The polypeptide is Transcriptional regulator MraZ (Mycolicibacterium gilvum (strain PYR-GCK) (Mycobacterium gilvum (strain PYR-GCK))).